We begin with the raw amino-acid sequence, 676 residues long: MTQVAKKILVTCALPYANGSIHLGHMLEHVQADIWVRYQRMRGNQVHFICADDAHGTPIMLKAQQMGIAPEQMIAAMSQEHQQDFAGFNISYDNYHSTHSEENRELSGLIYGRLKENGFIKNRTISQLYDPEKGMFLPDRFVKGTCPKCKAADQYGDNCEVCGATYSTTELIEPKSAVSGATPEMRESEHFFFDLPAFSDMLQAWTRSGALQEQVANKMQEWFDSGLQQWDITRDAPYFGFEVPDAPGKYFYVWLDAPIGYMGSFKNLCDKRGDLNFDDFWKKDSDADLYHFIGKDIVYFHSLFWPAMLEGSGFRKPTNLFVHGYVTVNGAKMSKSRGTFIKAGTYLQHLDADCLRYYYAAKLSSRIDDIDLNLEDFVQRVNADIVNKVVNLASRNAGFISKRFDGKLADKLADAELYKTFTDAGASIAEAYSSRESGRAIREIMALADIANRYVDEQAPWVVAKVEGRDADLQAICSMGINLFRVLMTYLKPVLPALTQRTEAFLNTELSWDAITTPLLSHQVNPFKALFNRIDLDKVSAMVDASKEDMVTAQNVVSGPLADNPVQDTINFDDFAKVDMRIALIKQAELVDGSDKLLRLTLDLGGETRQVFSGIREAYPDPAKLEGRLTVMVANLAPRKMRFGISEGMVMAAGPGGKDIFLLSPDSGAQPGMQVK.

The 'HIGH' region motif lies at 15 to 25; that stretch reads PYANGSIHLGH. Zn(2+) is bound by residues C146, C149, C159, and C162. The short motif at 332–336 is the 'KMSKS' region element; the sequence is KMSKS. K335 contacts ATP. The region spanning 574–676 is the tRNA-binding domain; it reads DFAKVDMRIA…SGAQPGMQVK (103 aa).

It belongs to the class-I aminoacyl-tRNA synthetase family. MetG type 1 subfamily. Homodimer. The cofactor is Zn(2+).

The protein localises to the cytoplasm. The enzyme catalyses tRNA(Met) + L-methionine + ATP = L-methionyl-tRNA(Met) + AMP + diphosphate. Its function is as follows. Is required not only for elongation of protein synthesis but also for the initiation of all mRNA translation through initiator tRNA(fMet) aminoacylation. The chain is Methionine--tRNA ligase from Pectobacterium atrosepticum (strain SCRI 1043 / ATCC BAA-672) (Erwinia carotovora subsp. atroseptica).